Consider the following 345-residue polypeptide: Methylthioribose-1-phosphate isomerase 2 (345 aa).

Substrate-binding positions include 47–49 (RGA), Arg-88, and Gln-194. Asp-235 (proton donor) is an active-site residue. 245–246 (NK) is a substrate binding site.

This sequence belongs to the eIF-2B alpha/beta/delta subunits family. MtnA subfamily.

It carries out the reaction 5-(methylsulfanyl)-alpha-D-ribose 1-phosphate = 5-(methylsulfanyl)-D-ribulose 1-phosphate. Its pathway is amino-acid biosynthesis; L-methionine biosynthesis via salvage pathway; L-methionine from S-methyl-5-thio-alpha-D-ribose 1-phosphate: step 1/6. In terms of biological role, catalyzes the interconversion of methylthioribose-1-phosphate (MTR-1-P) into methylthioribulose-1-phosphate (MTRu-1-P). In Pseudothermotoga lettingae (strain ATCC BAA-301 / DSM 14385 / NBRC 107922 / TMO) (Thermotoga lettingae), this protein is Methylthioribose-1-phosphate isomerase 2.